Consider the following 400-residue polypeptide: Na(+)/H(+) antiporter NhaA (400 aa).

A run of 11 helical transmembrane segments spans residues 9–29 (FLVSEASGGIFLIAAAVIAMV), 60–80 (LILWVNDGLMAIFFFVLGLEL), 96–116 (VLPAVGAIGGIVVPAFIFYLF), 127–147 (WAIPTATDTAFALGIIMILGA), 155–175 (IFLVTLAIIDDVCAILIMAIF), 180–200 (LSLISFGVAAIVILGLLALNL), 210–230 (LILGIILWISVLKSGVHATLA), 263–283 (YFVLPVFAFVNAGISLKGIGL), 294–314 (VILGLFLGKQIGVFGFCFVAI), 327–347 (WISFYGLCILTGIGFTMSLFI), and 366–386 (VLIASVISGVLGYIVLYIASV).

Belongs to the NhaA Na(+)/H(+) (TC 2.A.33) antiporter family.

The protein resides in the cell inner membrane. The catalysed reaction is Na(+)(in) + 2 H(+)(out) = Na(+)(out) + 2 H(+)(in). In terms of biological role, na(+)/H(+) antiporter that extrudes sodium in exchange for external protons. This Campylobacter curvus (strain 525.92) protein is Na(+)/H(+) antiporter NhaA.